Reading from the N-terminus, the 222-residue chain is N-(5'-phosphoribosyl)anthranilate isomerase (222 aa).

This sequence belongs to the TrpF family.

The enzyme catalyses N-(5-phospho-beta-D-ribosyl)anthranilate = 1-(2-carboxyphenylamino)-1-deoxy-D-ribulose 5-phosphate. It functions in the pathway amino-acid biosynthesis; L-tryptophan biosynthesis; L-tryptophan from chorismate: step 3/5. This is N-(5'-phosphoribosyl)anthranilate isomerase from Brucella abortus (strain S19).